Reading from the N-terminus, the 524-residue chain is Histidine ammonia-lyase (524 aa).

The segment at residues 139 to 141 (ASG) is a cross-link (5-imidazolinone (Ala-Gly)). Serine 140 is modified (2,3-didehydroalanine (Ser)). Residues 500-524 (ADTQAPAPAKLPDSGDEDRDTTSRH) are disordered.

The protein belongs to the PAL/histidase family. In terms of processing, contains an active site 4-methylidene-imidazol-5-one (MIO), which is formed autocatalytically by cyclization and dehydration of residues Ala-Ser-Gly.

It localises to the cytoplasm. It carries out the reaction L-histidine = trans-urocanate + NH4(+). The protein operates within amino-acid degradation; L-histidine degradation into L-glutamate; N-formimidoyl-L-glutamate from L-histidine: step 1/3. The sequence is that of Histidine ammonia-lyase (hutH) from Deinococcus radiodurans (strain ATCC 13939 / DSM 20539 / JCM 16871 / CCUG 27074 / LMG 4051 / NBRC 15346 / NCIMB 9279 / VKM B-1422 / R1).